Consider the following 492-residue polypeptide: Probable cytosol aminopeptidase (492 aa).

2 residues coordinate Mn(2+): Lys-259 and Asp-264. Residue Lys-271 is part of the active site. Mn(2+) contacts are provided by Asp-283, Asp-342, and Glu-344. The active site involves Arg-346.

The protein belongs to the peptidase M17 family. It depends on Mn(2+) as a cofactor.

It is found in the cytoplasm. It carries out the reaction Release of an N-terminal amino acid, Xaa-|-Yaa-, in which Xaa is preferably Leu, but may be other amino acids including Pro although not Arg or Lys, and Yaa may be Pro. Amino acid amides and methyl esters are also readily hydrolyzed, but rates on arylamides are exceedingly low.. The catalysed reaction is Release of an N-terminal amino acid, preferentially leucine, but not glutamic or aspartic acids.. In terms of biological role, presumably involved in the processing and regular turnover of intracellular proteins. Catalyzes the removal of unsubstituted N-terminal amino acids from various peptides. This is Probable cytosol aminopeptidase (pepA) from Synechocystis sp. (strain ATCC 27184 / PCC 6803 / Kazusa).